A 508-amino-acid chain; its full sequence is CUGBP Elav-like family member 2 (508 aa).

2 necessary for RNA-binding, TNNT2 exon 5 and NMDA R1 exon 21 inclusion regions span residues 1-283 (MRCP…LQNL) and 357-508 (LAGM…SKPY). 3 RRM domains span residues 40–123 (IKMF…PADS), 132–212 (RKLF…FADT), and 423–501 (ANLF…LKRS).

The protein belongs to the CELF/BRUNOL family. In terms of assembly, interacts with A1CF. In terms of tissue distribution, expressed in tongue, spleen and brain (at protein level). Expressed in liver, thigh, stomach, lung and heart to very low levels (at protein level). Expressed in heart, brain, lung and muscle.

Its subcellular location is the nucleus. The protein resides in the cytoplasm. Functionally, RNA-binding protein implicated in the regulation of several post-transcriptional events. Involved in pre-mRNA alternative splicing, mRNA translation and stability. Mediates exon inclusion and/or exclusion in pre-mRNA that are subject to tissue-specific and developmentally regulated alternative splicing. Specifically activates exon 5 inclusion of TNNT2 in embryonic, but not adult, skeletal muscle. Activates TNNT2 exon 5 inclusion by antagonizing the repressive effect of PTB. Acts both as an activator and as a repressor of a pair of coregulated exons: promotes inclusion of the smooth muscle (SM) exon but exclusion of the non-muscle (NM) exon in actinin pre-mRNAs. Promotes inclusion of exonS 21 and exclusion of exon 5 of the NMDA receptor R1 pre-mRNA. Involved in the apoB RNA editing activity. Increases COX2 mRNA stability and inhibits COX2 mRNA translation in epithelial cells after radiation injury. Modulates the cellular apoptosis program by regulating COX2-mediated prostaglandin E2 (PGE2) expression. Binds to (CUG)n triplet repeats in the 3'-UTR of transcripts such as DMPK. Binds to the muscle-specific splicing enhancer (MSE) intronic sites flanking the TNNT2 alternative exon 5. Binds preferentially to UG-rich sequences, in particular UG repeat and UGUU motifs. Binds to apoB mRNA, specifically to AU-rich sequences located immediately upstream of the edited cytidine. Binds AU-rich sequences in the 3'-UTR of COX2 mRNA. Binds to an intronic RNA element responsible for the silencing of exon 21 splicing. Binds to (CUG)n repeats. May be a specific regulator of miRNA biogenesis. Binds to primary microRNA pri-MIR140 and, with CELF1, negatively regulates the processing to mature miRNA. The polypeptide is CUGBP Elav-like family member 2 (Celf2) (Mus musculus (Mouse)).